The sequence spans 367 residues: Alanine racemase (367 aa).

Lys-40 acts as the Proton acceptor; specific for D-alanine in catalysis. N6-(pyridoxal phosphate)lysine is present on Lys-40. Arg-136 contributes to the substrate binding site. Tyr-263 serves as the catalytic Proton acceptor; specific for L-alanine. Met-310 provides a ligand contact to substrate.

It belongs to the alanine racemase family. Pyridoxal 5'-phosphate serves as cofactor.

It carries out the reaction L-alanine = D-alanine. It functions in the pathway amino-acid biosynthesis; D-alanine biosynthesis; D-alanine from L-alanine: step 1/1. Catalyzes the interconversion of L-alanine and D-alanine. May also act on other amino acids. This Streptococcus thermophilus (strain CNRZ 1066) protein is Alanine racemase (alr).